We begin with the raw amino-acid sequence, 390 residues long: Transforming growth factor beta-1 proprotein (390 aa).

The N-terminal stretch at 1-29 is a signal peptide; the sequence is MPPSGLRLLPLLLPLLWLLMLTPGRPVAG. A straightjacket domain region spans residues 30 to 74; the sequence is LSTCKTIDMELVKRKGIEAIRGQILSKLRLASPPSQGDVPPGPLP. The arm domain stretch occupies residues 75-271; that stretch reads EAILALYNST…ATPLERAQHL (197 aa). 3 N-linked (GlcNAc...) asparagine glycosylation sites follow: N82, N136, and N176. The tract at residues 226-252 is bowtie tail; sequence DSKDNTLQVDINGFSSGRRGDLATIHG. A Cell attachment site motif is present at residues 244 to 246; sequence RGD. 4 disulfide bridges follow: C285-C294, C293-C356, C322-C387, and C326-C389.

The protein belongs to the TGF-beta family. In terms of assembly, homodimer; disulfide-linked. Interacts with the serine proteases, HTRA1 and HTRA3: the interaction with either inhibits TGFB1-mediated signaling and the HTRA protease activity is required for this inhibition. May interact with THSD4; this interaction may lead to sequestration by FBN1 microfibril assembly and attenuation of TGFB signaling. Interacts with CD109, DPT and ASPN. Interacts with EFEMP2. Interacts with TSKU; the interaction contributes to regulation of the hair cycle. Interacts with TGFBR3. Homodimer; disulfide-linked. Interacts with transforming growth factor beta-1 (TGF-beta-1) chain; interaction is non-covalent and maintains TGF-beta-1 in a latent state; each latency-associated peptide (LAP) monomer interacts with TGF-beta-1 in the other monomer. Interacts with LTBP1; leading to regulation of TGF-beta-1 activation. Interacts with LRRC32/GARP; leading to regulation of TGF-beta-1 activation on the surface of activated regulatory T-cells (Tregs). Interacts with LRRC33/NRROS; leading to regulation of TGF-beta-1 activation in macrophages and microglia. Interacts (via cell attachment site) with integrins ITGAV and ITGB6 (ITGAV:ITGB6), leading to release of the active TGF-beta-1. Interacts with NREP; the interaction results in a decrease in TGFB1 autoinduction. Interacts with HSP90AB1; inhibits latent TGFB1 activation. As to quaternary structure, homodimer; disulfide-linked. Interacts with TGF-beta receptors (TGFBR1 and TGFBR2), leading to signal transduction. In terms of processing, transforming growth factor beta-1 proprotein: The precursor proprotein is cleaved in the Golgi apparatus by FURIN to form Transforming growth factor beta-1 (TGF-beta-1) and Latency-associated peptide (LAP) chains, which remain non-covalently linked, rendering TGF-beta-1 inactive. Post-translationally, N-glycosylated. Deglycosylation leads to activation of Transforming growth factor beta-1 (TGF-beta-1); mechanisms triggering deglycosylation-driven activation of TGF-beta-1 are however unclear.

It localises to the secreted. The protein localises to the extracellular space. It is found in the extracellular matrix. Functionally, transforming growth factor beta-1 proprotein: Precursor of the Latency-associated peptide (LAP) and Transforming growth factor beta-1 (TGF-beta-1) chains, which constitute the regulatory and active subunit of TGF-beta-1, respectively. Its function is as follows. Required to maintain the Transforming growth factor beta-1 (TGF-beta-1) chain in a latent state during storage in extracellular matrix. Associates non-covalently with TGF-beta-1 and regulates its activation via interaction with 'milieu molecules', such as LTBP1, LRRC32/GARP and LRRC33/NRROS, that control activation of TGF-beta-1. Interaction with LRRC33/NRROS regulates activation of TGF-beta-1 in macrophages and microglia. Interaction with LRRC32/GARP controls activation of TGF-beta-1 on the surface of activated regulatory T-cells (Tregs). Interaction with integrins (ITGAV:ITGB6 or ITGAV:ITGB8) results in distortion of the Latency-associated peptide chain and subsequent release of the active TGF-beta-1. In terms of biological role, multifunctional protein that regulates the growth and differentiation of various cell types and is involved in various processes, such as normal development, immune function, microglia function and responses to neurodegeneration. Activation into mature form follows different steps: following cleavage of the proprotein in the Golgi apparatus, Latency-associated peptide (LAP) and Transforming growth factor beta-1 (TGF-beta-1) chains remain non-covalently linked rendering TGF-beta-1 inactive during storage in extracellular matrix. At the same time, LAP chain interacts with 'milieu molecules', such as LTBP1, LRRC32/GARP and LRRC33/NRROS that control activation of TGF-beta-1 and maintain it in a latent state during storage in extracellular milieus. TGF-beta-1 is released from LAP by integrins (ITGAV:ITGB6 or ITGAV:ITGB8): integrin-binding to LAP stabilizes an alternative conformation of the LAP bowtie tail and results in distortion of the LAP chain and subsequent release of the active TGF-beta-1. Once activated following release of LAP, TGF-beta-1 acts by binding to TGF-beta receptors (TGFBR1 and TGFBR2), which transduce signal. While expressed by many cells types, TGF-beta-1 only has a very localized range of action within cell environment thanks to fine regulation of its activation by Latency-associated peptide chain (LAP) and 'milieu molecules'. Plays an important role in bone remodeling: acts as a potent stimulator of osteoblastic bone formation, causing chemotaxis, proliferation and differentiation in committed osteoblasts. Can promote either T-helper 17 cells (Th17) or regulatory T-cells (Treg) lineage differentiation in a concentration-dependent manner. At high concentrations, leads to FOXP3-mediated suppression of RORC and down-regulation of IL-17 expression, favoring Treg cell development. At low concentrations in concert with IL-6 and IL-21, leads to expression of the IL-17 and IL-23 receptors, favoring differentiation to Th17 cells. Stimulates sustained production of collagen through the activation of CREB3L1 by regulated intramembrane proteolysis (RIP). Mediates SMAD2/3 activation by inducing its phosphorylation and subsequent translocation to the nucleus. Positively regulates odontoblastic differentiation in dental papilla cells, via promotion of IPO7-mediated translocation of phosphorylated SMAD2 to the nucleus and subsequent transcription of target genes. Can induce epithelial-to-mesenchymal transition (EMT) and cell migration in various cell types. The polypeptide is Transforming growth factor beta-1 proprotein (TGFB1) (Ovis aries (Sheep)).